We begin with the raw amino-acid sequence, 302 residues long: Pantothenate synthetase (302 aa).

47 to 54 (MGALHEGH) is a binding site for ATP. His-54 serves as the catalytic Proton donor. Position 79 (Gln-79) interacts with (R)-pantoate. Residue Gln-79 coordinates beta-alanine. 165 to 168 (GEKD) contacts ATP. (R)-pantoate is bound at residue Gln-171. ATP-binding positions include Val-194 and 202–205 (LSSR).

It belongs to the pantothenate synthetase family. As to quaternary structure, homodimer.

It localises to the cytoplasm. It catalyses the reaction (R)-pantoate + beta-alanine + ATP = (R)-pantothenate + AMP + diphosphate + H(+). Its pathway is cofactor biosynthesis; (R)-pantothenate biosynthesis; (R)-pantothenate from (R)-pantoate and beta-alanine: step 1/1. Its function is as follows. Catalyzes the condensation of pantoate with beta-alanine in an ATP-dependent reaction via a pantoyl-adenylate intermediate. This Saccharopolyspora erythraea (strain ATCC 11635 / DSM 40517 / JCM 4748 / NBRC 13426 / NCIMB 8594 / NRRL 2338) protein is Pantothenate synthetase.